A 230-amino-acid polypeptide reads, in one-letter code: Thioredoxin domain-containing protein PLP3B (230 aa).

Positions 89–173 (VSEGDFLGEV…GIAMDRLVGF (85 aa)) constitute a Thioredoxin domain. Residues 199–230 (EKRKEEDEEDYEYQESIRRSVRSSANVDSDSD) are disordered. Residues 220 to 230 (RSSANVDSDSD) are compositionally biased toward polar residues.

The protein belongs to the phosducin family. In terms of assembly, interacts with TUBB2, TUBB3, TUBB4 and TUBB5. Expressed in roots, cotyledons, leaves, stems and flowers.

The protein resides in the cytoplasm. It is found in the nucleus. In terms of biological role, tubulin-binding protein involved in microtubule formation. The sequence is that of Thioredoxin domain-containing protein PLP3B (PLP3B) from Arabidopsis thaliana (Mouse-ear cress).